The primary structure comprises 713 residues: Calpain-1 catalytic subunit (713 aa).

Positions 55 to 354 constitute a Calpain catalytic domain; the sequence is LFQDEAFPPV…FTKLEICNLT (300 aa). Gln-109 and Asp-114 together coordinate Ca(2+). Active-site residues include Cys-115, His-272, and Asn-296. The Ca(2+) site is built by Asp-318 and Glu-323. At Thr-354 the chain carries Phosphothreonine. A domain III region spans residues 355–525; sequence PDALKSRTLR…KKAGTQELDD (171 aa). Residues 526–541 are linker; the sequence is QIQANLPDEKVLSEEE. EF-hand domains are found at residues 540–575, 584–617, 614–649, and 679–713; these read EEIDDNFKTLFSKLAGDDMEISVKELQTILNRIISK, FSLESCRSMVNLMDRDGNGKLGLVEFNILWNRIR, NRIRNYLTIFRKFDLDKSGSMSAYEMRMAIEAAGFK, and VRLETMFRFFKLLDTDLDGVVTFDLFKWLQLTMFA. The segment at 542–712 is domain IV; it reads IDDNFKTLFS…LFKWLQLTMF (171 aa). Ca(2+)-binding residues include Asp-597, Asp-599, Asn-601, Lys-603, Glu-608, Asp-627, Asp-629, Ser-631, Ser-633, and Glu-638.

It belongs to the peptidase C2 family. Forms a heterodimer with a small (regulatory) subunit CAPNS1. Ca(2+) is required as a cofactor. Post-translationally, undergoes calcium-induced successive autoproteolytic cleavages that generate a membrane-bound 78 kDa active form and an intracellular 75 kDa active form. Calpastatin reduces with high efficiency the transition from 78 kDa to 75 kDa calpain forms.

It localises to the cytoplasm. Its subcellular location is the cell membrane. It catalyses the reaction Broad endopeptidase specificity.. With respect to regulation, activated by micromolar concentrations of calcium and inhibited by calpastatin. Its function is as follows. Calcium-regulated non-lysosomal thiol-protease which catalyzes limited proteolysis of substrates involved in cytoskeletal remodeling and signal transduction. Proteolytically cleaves CTBP1 at 'Asn-375', 'Gly-388' and 'His-410'. Cleaves and activates caspase-7 (CASP7). This chain is Calpain-1 catalytic subunit, found in Mus musculus (Mouse).